Consider the following 432-residue polypeptide: UDP-N-acetylmuramate--L-alanine ligase (432 aa).

An ATP-binding site is contributed by 108–114 (GAHGKTS).

This sequence belongs to the MurCDEF family.

Its subcellular location is the cytoplasm. The catalysed reaction is UDP-N-acetyl-alpha-D-muramate + L-alanine + ATP = UDP-N-acetyl-alpha-D-muramoyl-L-alanine + ADP + phosphate + H(+). The protein operates within cell wall biogenesis; peptidoglycan biosynthesis. Functionally, cell wall formation. This Bacillus licheniformis (strain ATCC 14580 / DSM 13 / JCM 2505 / CCUG 7422 / NBRC 12200 / NCIMB 9375 / NCTC 10341 / NRRL NRS-1264 / Gibson 46) protein is UDP-N-acetylmuramate--L-alanine ligase.